Here is a 128-residue protein sequence, read N- to C-terminus: AECKVTVDSTDQMSFDTKAIEIDKSCKTFTVDLKHSGNLPKNVMGHNWVLTTQADMQPVATDGMAAGIDKNYLKEGDTRIIAHTKIIGAGETDSVTFDVSKLKADGKYMFFCSFPGHIAMMKGTVTLK.

A Plastocyanin-like domain is found at 1-128 (AECKVTVDST…AMMKGTVTLK (128 aa)). C3 and C26 are disulfide-bonded. Cu cation contacts are provided by H46, C112, H117, and M121.

The protein resides in the periplasm. Functionally, transfers electrons from cytochrome c551 to cytochrome oxidase. This is Azurin from Pseudomonas fluorescens biotype C.